Here is a 725-residue protein sequence, read N- to C-terminus: MAPFGGKSLADVVSGIGGNGVGGALAAVAAALLVRLFAGPGIALLPEDEAEDDYAETEDGGGDSIRPVTIRWRNITCSLSDKSSKSVRFLLKNVSGEAKPGRLLAIMGPSGSGKTTLLNVLAGQLSLSPRLHLSGLLEVNGKPSSSKAYKLAFVRQEDLFFSQLTVRETLSFAAELQLPEISSAEERDEYVNNLLLKLGLVSCADSCVGDAKVRGISGGEKKRLSLACELIASPSVIFADEPTTGLDAFQAEKVMETLQKLAQDGHTVICSIHQPRGSVYAKFDDIVLLTEGTLVYAGPAGKEPLTYFGNFGFLCPEHVNPAEFLADLISVDYSSSETVYSSQKRVHALVDAFSQRSSSVLYATPLSMKEETKNGMRPRRKAIVERTDGWWRQFFLLLKRAWMQASRDGPTNKVRARMSVASAVIFGSVFWRMGKSQTSIQDRMGLLQVAAINTAMAALTKTVGVFPKERAIVDRERSKGSYSLGPYLLSKTIAEIPIGAAFPLMFGAVLYPMARLNPTLSRFGKFCGIVTVESFAASAMGLTVGAMVPSTEAAMAVGPSLMTVFIVFGGYYVNADNTPIIFRWIPRASLIRWAFQGLCINEFSGLKFDHQNTFDVQTGEQALERLSFGGRRIRETIAAQSRILMFWYSATYLLLEKNKPKYQKLELLVDNGETGNSGVQLDKAEVDQTEKPEDDDINQPLDDQNQTSDSDDELDEIRPFVLEGL.

Residues 12–34 traverse the membrane as a helical segment; the sequence is VVSGIGGNGVGGALAAVAAALLV. Residues 70–316 enclose the ABC transporter domain; it reads IRWRNITCSL…YFGNFGFLCP (247 aa). 108–115 is an ATP binding site; the sequence is GPSGSGKT. Residues 392–603 enclose the ABC transmembrane type-2 domain; sequence RQFFLLLKRA…AFQGLCINEF (212 aa). Transmembrane regions (helical) follow at residues 446–466, 493–513, 528–548, and 553–573; these read LLQV…VGVF, IAEI…LYPM, GIVT…GAMV, and AAMA…GYYV. A disordered region spans residues 676–725; it reads NSGVQLDKAEVDQTEKPEDDDINQPLDDQNQTSDSDDELDEIRPFVLEGL. The span at 682-691 shows a compositional bias: basic and acidic residues; that stretch reads DKAEVDQTEK.

This sequence belongs to the ABC transporter superfamily. ABCG family. Eye pigment precursor importer (TC 3.A.1.204) subfamily.

The protein resides in the membrane. The sequence is that of ABC transporter G family member 7 (ABCG7) from Arabidopsis thaliana (Mouse-ear cress).